Here is a 194-residue protein sequence, read N- to C-terminus: Adenylate kinase isoenzyme 1 (194 aa).

At Ala-2 the chain carries N-acetylalanine. An ATP-binding site is contributed by 18–23 (GSGKGT). The segment at 38-67 (SSGDLLRAEVASGSERGKQLQAIMQKGELV) is NMP. Residues Ser-39, Arg-44, 65 to 67 (ELV), 94 to 97 (GYPR), and Gln-101 contribute to the AMP site. An LID region spans residues 131–141 (KRGQTSGRSDD). Position 132 (Arg-132) interacts with ATP. 2 residues coordinate AMP: Arg-138 and Arg-149. Residue Leu-177 participates in ATP binding.

This sequence belongs to the adenylate kinase family. AK1 subfamily. As to quaternary structure, monomer. It depends on Mg(2+) as a cofactor.

It is found in the cytoplasm. It catalyses the reaction a ribonucleoside 5'-phosphate + ATP = a ribonucleoside 5'-diphosphate + ADP. The enzyme catalyses AMP + ATP = 2 ADP. The catalysed reaction is dAMP + ATP = dADP + ADP. It carries out the reaction dATP + AMP = dADP + ADP. It catalyses the reaction dAMP + dATP = 2 dADP. The enzyme catalyses a 2'-deoxyribonucleoside 5'-diphosphate + ATP = a 2'-deoxyribonucleoside 5'-triphosphate + ADP. The catalysed reaction is a ribonucleoside 5'-diphosphate + ATP = a ribonucleoside 5'-triphosphate + ADP. It carries out the reaction CDP + GTP = CTP + GDP. It catalyses the reaction GDP + ATP = GTP + ADP. The enzyme catalyses UDP + ATP = UTP + ADP. The catalysed reaction is GTP + UDP = UTP + GDP. It carries out the reaction dTDP + GTP = dTTP + GDP. It catalyses the reaction dCDP + GTP = dCTP + GDP. The enzyme catalyses dGDP + ATP = dGTP + ADP. The catalysed reaction is dADP + GTP = dATP + GDP. It carries out the reaction thiamine diphosphate + ADP = thiamine triphosphate + AMP. Its function is as follows. Catalyzes the reversible transfer of the terminal phosphate group between ATP and AMP. Also displays broad nucleoside diphosphate kinase activity. Plays an important role in cellular energy homeostasis and in adenine nucleotide metabolism. Also catalyzes at a very low rate the synthesis of thiamine triphosphate (ThTP) from thiamine diphosphate (ThDP) and ADP. The polypeptide is Adenylate kinase isoenzyme 1 (ak1) (Cyprinus carpio (Common carp)).